The sequence spans 231 residues: Superoxide dismutase [Mn], mitochondrial (231 aa).

Residues 1-27 (MALRTLASRKTLAAAALPLAAAAAARG) constitute a mitochondrion transit peptide. H55, H103, D192, and H196 together coordinate Mn(2+).

This sequence belongs to the iron/manganese superoxide dismutase family. Homotetramer. Mn(2+) is required as a cofactor.

Its subcellular location is the mitochondrion matrix. The catalysed reaction is 2 superoxide + 2 H(+) = H2O2 + O2. Functionally, destroys superoxide anion radicals which are normally produced within the cells and which are toxic to biological systems. This is Superoxide dismutase [Mn], mitochondrial (SODA) from Oryza sativa subsp. japonica (Rice).